The chain runs to 365 residues: tRNA-specific 2-thiouridylase MnmA (365 aa).

ATP-binding positions include 14-21 (AMSGGVDS) and Leu40. The Nucleophile role is filled by Cys108. A disulfide bridge connects residues Cys108 and Cys204. Residue Gly132 participates in ATP binding. The interaction with tRNA stretch occupies residues 154 to 156 (KDQ). The active-site Cysteine persulfide intermediate is Cys204.

The protein belongs to the MnmA/TRMU family.

The protein localises to the cytoplasm. It catalyses the reaction S-sulfanyl-L-cysteinyl-[protein] + uridine(34) in tRNA + AH2 + ATP = 2-thiouridine(34) in tRNA + L-cysteinyl-[protein] + A + AMP + diphosphate + H(+). Its function is as follows. Catalyzes the 2-thiolation of uridine at the wobble position (U34) of tRNA, leading to the formation of s(2)U34. The polypeptide is tRNA-specific 2-thiouridylase MnmA (Rickettsia africae (strain ESF-5)).